The following is a 209-amino-acid chain: Ribosomal RNA large subunit methyltransferase E (209 aa).

The S-adenosyl-L-methionine site is built by Gly63, Trp65, Asp83, Asp99, and Asp124. Residue Lys164 is the Proton acceptor of the active site.

It belongs to the class I-like SAM-binding methyltransferase superfamily. RNA methyltransferase RlmE family.

It localises to the cytoplasm. The catalysed reaction is uridine(2552) in 23S rRNA + S-adenosyl-L-methionine = 2'-O-methyluridine(2552) in 23S rRNA + S-adenosyl-L-homocysteine + H(+). Functionally, specifically methylates the uridine in position 2552 of 23S rRNA at the 2'-O position of the ribose in the fully assembled 50S ribosomal subunit. This Vibrio vulnificus (strain CMCP6) protein is Ribosomal RNA large subunit methyltransferase E.